A 306-amino-acid polypeptide reads, in one-letter code: Glutathione transport system permease protein GsiC (306 aa).

Over 1–8 (MLNYVLKR) the chain is Cytoplasmic. A helical membrane pass occupies residues 9 to 29 (LLGLIPTLLIVAVLVFLFVHL). Over 30-102 (LPGDPARLIA…SRFLPTLWLT (73 aa)) the chain is Periplasmic. The region spanning 95-292 (FLPTLWLTIT…LEFILINLVV (198 aa)) is the ABC transmembrane type-1 domain. The chain crosses the membrane as a helical span at residues 103–123 (ITSMIWAVLFGMAIGIAAAVW). Residues 124-134 (RNRWPDRVGMT) are Cytoplasmic-facing. Residues 135-155 (LAVTGISFPAFALGMLLMQIF) form a helical membrane-spanning segment. Residues 156-168 (SVDLGWLPTVGAD) lie on the Periplasmic side of the membrane. The chain crosses the membrane as a helical span at residues 169–189 (SWQHYILPSLTLGAAVASVMA). The Cytoplasmic segment spans residues 190–228 (RFTRSSFVDVLSEDYMRTARAKGVSETWVVLKHGLRNAM). Residues 229-249 (IPVVTMMGLQFGFLLGGSIVV) form a helical membrane-spanning segment. Residues 250–278 (EKVFNWPGLGRLLVDSVDMRDYPVIQAEV) are Periplasmic-facing. The helical transmembrane segment at 279–299 (LLFSLEFILINLVVDVLYAAI) threads the bilayer. The Cytoplasmic portion of the chain corresponds to 300–306 (NPAIRYK).

The protein belongs to the binding-protein-dependent transport system permease family. As to quaternary structure, the complex is composed of two ATP-binding proteins (GsiA), two transmembrane proteins (GsiC and GsiD) and a solute-binding protein (GsiB).

The protein resides in the cell inner membrane. In terms of biological role, part of the ABC transporter complex GsiABCD involved in glutathione import. Probably responsible for the translocation of the substrate across the membrane. The sequence is that of Glutathione transport system permease protein GsiC from Salmonella choleraesuis (strain SC-B67).